Reading from the N-terminus, the 148-residue chain is Macrodomain Ter protein (148 aa).

It belongs to the MatP family. In terms of assembly, homodimer.

It localises to the cytoplasm. Functionally, required for spatial organization of the terminus region of the chromosome (Ter macrodomain) during the cell cycle. Prevents early segregation of duplicated Ter macrodomains during cell division. Binds specifically to matS, which is a 13 bp signature motif repeated within the Ter macrodomain. The chain is Macrodomain Ter protein from Haemophilus influenzae (strain 86-028NP).